Reading from the N-terminus, the 341-residue chain is Methionine import ATP-binding protein MetN 3 (341 aa).

An ABC transporter domain is found at 2–241 (IEFQNVTKTF…PSHETTKRFI (240 aa)). 38–45 (GFSGAGKS) is an ATP binding site.

It belongs to the ABC transporter superfamily. Methionine importer (TC 3.A.1.24) family. As to quaternary structure, the complex is composed of two ATP-binding proteins (MetN), two transmembrane proteins (MetI) and a solute-binding protein (MetQ).

Its subcellular location is the cell membrane. The enzyme catalyses L-methionine(out) + ATP + H2O = L-methionine(in) + ADP + phosphate + H(+). It catalyses the reaction D-methionine(out) + ATP + H2O = D-methionine(in) + ADP + phosphate + H(+). Its function is as follows. Part of the ABC transporter complex MetNIQ involved in methionine import. Responsible for energy coupling to the transport system. The sequence is that of Methionine import ATP-binding protein MetN 3 from Oceanobacillus iheyensis (strain DSM 14371 / CIP 107618 / JCM 11309 / KCTC 3954 / HTE831).